We begin with the raw amino-acid sequence, 911 residues long: Gag-Pro polyprotein (911 aa).

The propeptide occupies 101–161 (AAVAQTEEIL…TKKPKRFPVL (61 aa)). Polar residues-rich tracts occupy residues 113-125 (NSQT…SQNP) and 140-152 (KSSS…LSST). The interval 113–178 (NSQTDLTKTS…DPEDPNPSEV (66 aa)) is disordered. A PPXY motif motif is present at residues 202 to 205 (PPPY). The PTAP/PSAP motif signature appears at 210–213 (PSAP). The stretch at 216–257 (MAVVNPKEELKEKIAQLEEQIKLEELHQALISKLQKLKTGNE) forms a coiled coil. Residues 260-279 (THPDTAGGLSRTPHWPGQHI) are disordered. 2 CCHC-type zinc fingers span residues 547–564 (GCCF…NCHE) and 576–593 (GLCP…ECKS). The interval 592–626 (KSKTDNQGNPIPPHQGNRVEGPAPGPETSLWGSQL) is disordered. In terms of domain architecture, Peptidase A2 spans 780–856 (FTGLIDTGAD…LPVNLWGRDL (77 aa)). Asp785 serves as the catalytic Protease; shared with dimeric partner. Positions 867–911 (PNDIVTAQMLAQGYSPGKGLGKKENGILHPIPNQGQSNKKGFGNF) constitute a G-patch domain.

As to quaternary structure, homodimer. Interacts with the reverse transcriptase/ribonuclease H. In terms of assembly, homotrimer. In terms of processing, released by autocatalytic processing. The protease can undergo further autoprocessing to yield 2 shorter but enzymatically active forms of 12 kDa and 13 kDa without the GDP domain. the 12 kDa form is monomeric. Myristoylated. Myristoylation of the matrix (MA) domain mediates the transport and binding of Gag polyproteins to the host plasma membrane and is required for the assembly of viral particles. Post-translationally, specific enzymatic cleavages in vivo yield mature proteins.

It is found in the virion. It carries out the reaction dUTP + H2O = dUMP + diphosphate + H(+). Its function is as follows. Matrix protein. In terms of biological role, nucleocapsid protein p14: Nucleocapsid protein. Capsid protein. Functionally, the aspartyl protease mediates proteolytic cleavages of Gag and Gag-Pol polyproteins during or shortly after the release of the virion from the plasma membrane. Cleavages take place as an ordered, step-wise cascade to yield mature proteins. This process is called maturation. Displays maximal activity during the budding process just prior to particle release from the cell. Its function is as follows. Enhances the activity of the reverse transcriptase. May be part of the mature RT. This Mason-Pfizer monkey virus (MPMV) protein is Gag-Pro polyprotein (gag-pro).